The following is a 352-amino-acid chain: 7,8-didemethyl-8-hydroxy-5-deazariboflavin synthase (352 aa).

The Radical SAM core domain occupies 35–275; sequence ITFSKNAFIP…EGISIQVPPN (241 aa). [4Fe-4S] cluster contacts are provided by cysteine 49, cysteine 53, and cysteine 56.

It belongs to the radical SAM superfamily. CofG family. Consists of two subunits, CofG and CofH. The cofactor is [4Fe-4S] cluster.

It carries out the reaction 5-amino-5-(4-hydroxybenzyl)-6-(D-ribitylimino)-5,6-dihydrouracil + S-adenosyl-L-methionine = 7,8-didemethyl-8-hydroxy-5-deazariboflavin + 5'-deoxyadenosine + L-methionine + NH4(+) + H(+). The protein operates within cofactor biosynthesis; coenzyme F0 biosynthesis. In terms of biological role, catalyzes the radical-mediated synthesis of 7,8-didemethyl-8-hydroxy-5-deazariboflavin from 5-amino-5-(4-hydroxybenzyl)-6-(D-ribitylimino)-5,6-dihydrouracil. This chain is 7,8-didemethyl-8-hydroxy-5-deazariboflavin synthase, found in Methanococcus maripaludis (strain C5 / ATCC BAA-1333).